The sequence spans 826 residues: Periplasmic nitrate reductase (826 aa).

A signal peptide (tat-type signal) is located at residues 1–32 (MSISRREFLKANAAVAAATAVGATLPVKIVEA). Residues 39–95 (IKWDKAPCRFCGVGCSVLVGTDNGKVVATKGDPESPVNKGLNCIKGYFLSKIMYGKD) enclose the 4Fe-4S Mo/W bis-MGD-type domain. [4Fe-4S] cluster contacts are provided by Cys-46, Cys-49, Cys-53, and Cys-81. Mo-bis(molybdopterin guanine dinucleotide)-binding positions include Lys-83, Gln-150, Asn-175, Cys-179, 212-219 (WGANMAEM), 262-264 (QSD), Met-372, Gln-376, Asn-482, 508-509 (SD), Lys-531, Asp-558, and 716-725 (TGRVLEHWHT). Phe-792 contacts substrate. Mo-bis(molybdopterin guanine dinucleotide) is bound by residues Asn-800 and Lys-817.

Belongs to the prokaryotic molybdopterin-containing oxidoreductase family. NasA/NapA/NarB subfamily. Component of the periplasmic nitrate reductase NapAB complex composed of NapA and NapB. [4Fe-4S] cluster serves as cofactor. Requires Mo-bis(molybdopterin guanine dinucleotide) as cofactor. Post-translationally, predicted to be exported by the Tat system. The position of the signal peptide cleavage has not been experimentally proven.

Its subcellular location is the periplasm. The enzyme catalyses 2 Fe(II)-[cytochrome] + nitrate + 2 H(+) = 2 Fe(III)-[cytochrome] + nitrite + H2O. Catalytic subunit of the periplasmic nitrate reductase complex NapAB. Receives electrons from NapB and catalyzes the reduction of nitrate to nitrite. In Shewanella halifaxensis (strain HAW-EB4), this protein is Periplasmic nitrate reductase.